We begin with the raw amino-acid sequence, 414 residues long: Esterase FrsA (414 aa).

The protein belongs to the FrsA family.

It catalyses the reaction a carboxylic ester + H2O = an alcohol + a carboxylate + H(+). Catalyzes the hydrolysis of esters. In Shigella boydii serotype 4 (strain Sb227), this protein is Esterase FrsA.